Reading from the N-terminus, the 123-residue chain is Holo-[acyl-carrier-protein] synthase (123 aa).

Residues Asp9 and Glu57 each contribute to the Mg(2+) site.

Belongs to the P-Pant transferase superfamily. AcpS family. Requires Mg(2+) as cofactor.

The protein resides in the cytoplasm. The enzyme catalyses apo-[ACP] + CoA = holo-[ACP] + adenosine 3',5'-bisphosphate + H(+). In terms of biological role, transfers the 4'-phosphopantetheine moiety from coenzyme A to a Ser of acyl-carrier-protein. The sequence is that of Holo-[acyl-carrier-protein] synthase from Streptomyces avermitilis (strain ATCC 31267 / DSM 46492 / JCM 5070 / NBRC 14893 / NCIMB 12804 / NRRL 8165 / MA-4680).